Here is a 194-residue protein sequence, read N- to C-terminus: Outer surface 22 kDa lipoprotein (194 aa).

The signal sequence occupies residues 1–21 (MYKNGFFKNYLSLLLIFLVIA). The N-palmitoyl cysteine moiety is linked to residue C22. The S-diacylglycerol cysteine moiety is linked to residue C22.

It localises to the cell outer membrane. This is Outer surface 22 kDa lipoprotein (p22) from Borreliella burgdorferi (strain N40) (Borrelia burgdorferi).